We begin with the raw amino-acid sequence, 6713 residues long: Extracellular matrix-binding protein EbhA (6713 aa).

FIVAR domains lie at 1 to 58, 126 to 184, 252 to 310, 378 to 436, 504 to 562, 630 to 688, 756 to 814, 882 to 940, 1008 to 1066, 1134 to 1192, 1260 to 1318, 1386 to 1444, 1512 to 1570, 1638 to 1696, 1764 to 1822, 1890 to 1948, 2142 to 2200, 2268 to 2325, 2393 to 2451, 2519 to 2577, 2645 to 2703, 2771 to 2829, 2897 to 2955, 3023 to 3081, 3149 to 3207, 3275 to 3333, 3401 to 3459, 3527 to 3585, 3653 to 3711, 3779 to 3837, 3905 to 3963, 4031 to 4089, 4157 to 4218, 4283 to 4341, 4409 to 4467, 4535 to 4592, 4660 to 4718, 4786 to 4844, 4912 to 4970, 5038 to 5096, 5164 to 5222, 5290 to 5344, 5412 to 5471, and 5666 to 5722; these read MGNL…VEQA, AMGQ…VTAA, AMKG…ITQA, QMGN…VEAA, AMAN…VENA, AMGT…INQI, AMGQ…VDRA, AMNS…VDNA, AMGA…INDM, AMTA…VNSA, AMHS…VEQA, AMGQ…VERA, AMTA…VTNA, AMKG…INQA, AMTN…VETA, AMNQ…INQK, AMGN…VQAA, AMGQ…VEAA, AMQR…VEQA, AMDQ…VTAA, AMNQ…VTQA, AMER…VEAA, AMGN…VEAA, AMDK…INQA, AMGN…VEQA, AMTQ…ITAA, AMTQ…IQQA, AMTN…VEQA, AMTQ…VAQA, AMGT…VTKA, AMGN…ITRA, AMDQ…ITNE, AMEL…VNGA, AMHG…INQV, LMDA…VSSA, AMKA…IDQA, AMEA…VEQL, AMQA…VEQL, AMET…VEQA, SMDQ…VDQA, AMDQ…VIKL, and AMET…INGA. A helical membrane pass occupies residues 6518 to 6540; that stretch reads VIKNAIGVVGISGLLASFWFFIA. A disordered region spans residues 6616–6713; it reads RRKEDEEDVE…KKKKSKKNKK (98 aa). Basic and acidic residues-rich tracts occupy residues 6631 to 6641 and 6680 to 6690; these read TDEKVLKDNEH and QKDNQSKDKKS. The span at 6695-6713 shows a compositional bias: basic residues; that stretch reads TSKKVAAKKKKKKSKKNKK.

Its subcellular location is the cell membrane. In Staphylococcus aureus (strain Mu3 / ATCC 700698), this protein is Extracellular matrix-binding protein EbhA (ebhA).